The following is a 1242-amino-acid chain: Receptor-type adenylate cyclase GRESAG 4.1 (1242 aa).

The Cytoplasmic segment spans residues Met1–His39. The helical transmembrane segment at Tyr40–Ala60 threads the bilayer. Topologically, residues Asp61–Asn862 are extracellular. 11 N-linked (GlcNAc...) asparagine glycosylation sites follow: Asn116, Asn289, Asn318, Asn338, Asn401, Asn534, Asn563, Asn603, Asn702, Asn741, and Asn818. A helical membrane pass occupies residues Phe863–Pro883. Topologically, residues Ala884–Tyr1242 are cytoplasmic. Residues Thr901–Glu1056 enclose the Guanylate cyclase domain. 2 residues coordinate Mg(2+): Asp906 and Asp949.

Belongs to the adenylyl cyclase class-3 family. It depends on Mg(2+) as a cofactor.

The protein resides in the membrane. The catalysed reaction is ATP = 3',5'-cyclic AMP + diphosphate. Its function is as follows. Could act as a receptor for an unknown ligand. The chain is Receptor-type adenylate cyclase GRESAG 4.1 (GRESAG 4.1) from Trypanosoma brucei brucei.